The sequence spans 418 residues: PP2A regulatory subunit TAP46 (418 aa).

The interval 367-418 (KMIQESNSAWHKDGSRSAQEDEDAEEEKARAWDDWKDDNPRGAGNKKLTPCG) is disordered. Basic and acidic residues-rich tracts occupy residues 376–385 (WHKDGSRSAQ) and 393–406 (EKAR…DDNP).

Belongs to the IGBP1/TAP42 family.

Involved in the regulation of the TOR signaling pathway. Seems to act as a regulator of PP2A catalytic activity. In Oryza sativa subsp. japonica (Rice), this protein is PP2A regulatory subunit TAP46.